Here is a 456-residue protein sequence, read N- to C-terminus: MQLSTLTALSPLDGRYQDKVTPLRAIFSEFGLMKFRVAVEVRWLQKLASTADITEVPPFSTQANAFLDGIVANFNEADAARIKEIERTTNHDVKAVEYFLKEKIQNEVELVKVSEFIHFACTSEDINNLSHALMLSTARDEVILPEWQKLIDEITRLAEEYKTIPLLSRTHGQPASPSTVGKEMANVVYRLKRQFKQLQNAEILGKINGAVGNYNAHLSAYPNIDWHKFSEEFVTSLGIQWNPYTTQIEPHDYITEFFDAVVRFNTIIIDFDRDLWGYIALNHFKQRTIAGEIGSSTMPHKVNPIDFENSEGNLGLANAVMTHLGQKLPISRWQRDLTDSTVLRNLGVGLGYCLIAYASTRKGISKLEVNQPHLLEELNQNWEVLAEPIQTVMRRYGIEKPYEKLKELTRGKRVTEQAMREFIDKLDIPQEEKLRLQKLTPATYIGAAVELVEKLS.

N(6)-(1,2-dicarboxyethyl)-AMP contacts are provided by residues 15-16 (RY), 90-92 (NHD), and 122-123 (TS). His171 serves as the catalytic Proton donor/acceptor. A N(6)-(1,2-dicarboxyethyl)-AMP-binding site is contributed by Gln247. Residue Ser295 is the Proton donor/acceptor of the active site. N(6)-(1,2-dicarboxyethyl)-AMP contacts are provided by residues Ser296, 301-303 (KVN), Asn309, Arg335, and 340-344 (STVLR).

The protein belongs to the lyase 1 family. Adenylosuccinate lyase subfamily. As to quaternary structure, homotetramer. Residues from neighboring subunits contribute catalytic and substrate-binding residues to each active site.

It carries out the reaction N(6)-(1,2-dicarboxyethyl)-AMP = fumarate + AMP. The catalysed reaction is (2S)-2-[5-amino-1-(5-phospho-beta-D-ribosyl)imidazole-4-carboxamido]succinate = 5-amino-1-(5-phospho-beta-D-ribosyl)imidazole-4-carboxamide + fumarate. Its pathway is purine metabolism; AMP biosynthesis via de novo pathway; AMP from IMP: step 2/2. It functions in the pathway purine metabolism; IMP biosynthesis via de novo pathway; 5-amino-1-(5-phospho-D-ribosyl)imidazole-4-carboxamide from 5-amino-1-(5-phospho-D-ribosyl)imidazole-4-carboxylate: step 2/2. Catalyzes two reactions in de novo purine nucleotide biosynthesis. Catalyzes the breakdown of 5-aminoimidazole- (N-succinylocarboxamide) ribotide (SAICAR or 2-[5-amino-1-(5-phospho-beta-D-ribosyl)imidazole-4-carboxamido]succinate) to 5-aminoimidazole-4-carboxamide ribotide (AICAR or 5-amino-1-(5-phospho-beta-D-ribosyl)imidazole-4-carboxamide) and fumarate, and of adenylosuccinate (ADS or N(6)-(1,2-dicarboxyethyl)-AMP) to adenosine monophosphate (AMP) and fumarate. This Haemophilus influenzae (strain ATCC 51907 / DSM 11121 / KW20 / Rd) protein is Adenylosuccinate lyase (purB).